We begin with the raw amino-acid sequence, 335 residues long: Capsular polysaccharide phosphotransferase WcwK (335 aa).

It belongs to the stealth family.

This chain is Capsular polysaccharide phosphotransferase WcwK (wcwK), found in Streptococcus pneumoniae.